The following is an 812-amino-acid chain: Valine--tRNA ligase (812 aa).

A 'HIGH' region motif is present at residues 46–56 (PTVSGQLHIGH). The 'KMSKS' region signature appears at 536–540 (KMSKS). Residue Lys-539 participates in ATP binding.

This sequence belongs to the class-I aminoacyl-tRNA synthetase family. ValS type 2 subfamily. Monomer.

Its subcellular location is the cytoplasm. It catalyses the reaction tRNA(Val) + L-valine + ATP = L-valyl-tRNA(Val) + AMP + diphosphate. Its function is as follows. Catalyzes the attachment of valine to tRNA(Val). As ValRS can inadvertently accommodate and process structurally similar amino acids such as threonine, to avoid such errors, it has a 'posttransfer' editing activity that hydrolyzes mischarged Thr-tRNA(Val) in a tRNA-dependent manner. This is Valine--tRNA ligase from Rickettsia bellii (strain OSU 85-389).